We begin with the raw amino-acid sequence, 164 residues long: Peptide methionine sulfoxide reductase MsrA (164 aa).

The active site involves cysteine 16.

The protein belongs to the MsrA Met sulfoxide reductase family.

It catalyses the reaction L-methionyl-[protein] + [thioredoxin]-disulfide + H2O = L-methionyl-(S)-S-oxide-[protein] + [thioredoxin]-dithiol. It carries out the reaction [thioredoxin]-disulfide + L-methionine + H2O = L-methionine (S)-S-oxide + [thioredoxin]-dithiol. Functionally, has an important function as a repair enzyme for proteins that have been inactivated by oxidation. Catalyzes the reversible oxidation-reduction of methionine sulfoxide in proteins to methionine. The polypeptide is Peptide methionine sulfoxide reductase MsrA (Methanoculleus marisnigri (strain ATCC 35101 / DSM 1498 / JR1)).